The primary structure comprises 424 residues: CinA-like protein (424 aa).

It belongs to the CinA family.

The polypeptide is CinA-like protein (Prochlorococcus marinus (strain MIT 9301)).